The sequence spans 170 residues: Ergosterol biosynthetic protein 28 (170 aa).

3 consecutive transmembrane segments (helical) span residues 7-27, 116-136, and 141-161; these read FLPE…IISI, TLAY…LFVF, and FGLP…WMPL.

Belongs to the ERG28 family. As to quaternary structure, heterotetramer of ERG25, ERG26, ERG27 and ERG28. ERG28 acts as a scaffold to tether ERG27 and other 4,4-demethylation-related enzymes, forming a demethylation enzyme complex, in the endoplasmic reticulum.

It localises to the endoplasmic reticulum membrane. It participates in steroid metabolism; ergosterol biosynthesis. Its function is as follows. Sterol 24-C-methyltransferase; part of the third module of ergosterol biosynthesis pathway that includes the late steps of the pathway. ERG28 has a role as a scaffold to help anchor the catalytic components of the C-4 demethylation complex ERG25, ERG26 and ERG27 to the endoplasmic reticulum. The third module or late pathway involves the ergosterol synthesis itself through consecutive reactions that mainly occur in the endoplasmic reticulum (ER) membrane. Firstly, the squalene synthase ERG9 catalyzes the condensation of 2 farnesyl pyrophosphate moieties to form squalene, which is the precursor of all steroids. Squalene synthase is crucial for balancing the incorporation of farnesyl diphosphate (FPP) into sterol and nonsterol isoprene synthesis. Secondly, squalene is converted into lanosterol by the consecutive action of the squalene epoxidase ERG1 and the lanosterol synthase ERG7. Then, the delta(24)-sterol C-methyltransferase ERG6 methylates lanosterol at C-24 to produce eburicol. Eburicol is the substrate of the sterol 14-alpha demethylase encoded by CYP51A, CYP51B and CYP51C, to yield 4,4,24-trimethyl ergosta-8,14,24(28)-trienol. CYP51B encodes the enzyme primarily responsible for sterol 14-alpha-demethylation, and plays an essential role in ascospore formation. CYP51A encodes an additional sterol 14-alpha-demethylase, induced on ergosterol depletion and responsible for the intrinsic variation in azole sensitivity. The third CYP51 isoform, CYP51C, does not encode a sterol 14-alpha-demethylase, but is required for full virulence on host wheat ears. The C-14 reductase ERG24 then reduces the C14=C15 double bond which leads to 4,4-dimethylfecosterol. A sequence of further demethylations at C-4, involving the C-4 demethylation complex containing the C-4 methylsterol oxidases ERG25, the sterol-4-alpha-carboxylate 3-dehydrogenase ERG26 and the 3-keto-steroid reductase ERG27, leads to the production of fecosterol via 4-methylfecosterol. ERG28 has a role as a scaffold to help anchor ERG25, ERG26 and ERG27 to the endoplasmic reticulum. The C-8 sterol isomerase ERG2 then catalyzes the reaction which results in unsaturation at C-7 in the B ring of sterols and thus converts fecosterol to episterol. The sterol-C5-desaturases ERG3A and ERG3BB then catalyze the introduction of a C-5 double bond in the B ring to produce 5-dehydroepisterol. The C-22 sterol desaturases ERG5A and ERG5B further convert 5-dehydroepisterol into ergosta-5,7,22,24(28)-tetraen-3beta-ol by forming the C-22(23) double bond in the sterol side chain. Finally, ergosta-5,7,22,24(28)-tetraen-3beta-ol is substrate of the C-24(28) sterol reductase ERG4 to produce ergosterol. The polypeptide is Ergosterol biosynthetic protein 28 (Gibberella zeae (strain ATCC MYA-4620 / CBS 123657 / FGSC 9075 / NRRL 31084 / PH-1) (Wheat head blight fungus)).